A 153-amino-acid polypeptide reads, in one-letter code: Ribonuclease P protein component (153 aa).

The protein belongs to the RnpA family. Consists of a catalytic RNA component (M1 or rnpB) and a protein subunit.

The enzyme catalyses Endonucleolytic cleavage of RNA, removing 5'-extranucleotides from tRNA precursor.. RNaseP catalyzes the removal of the 5'-leader sequence from pre-tRNA to produce the mature 5'-terminus. It can also cleave other RNA substrates such as 4.5S RNA. The protein component plays an auxiliary but essential role in vivo by binding to the 5'-leader sequence and broadening the substrate specificity of the ribozyme. The chain is Ribonuclease P protein component from Helicobacter acinonychis (strain Sheeba).